Consider the following 440-residue polypeptide: Beta-1,3-galactosyl-O-glycosyl-glycoprotein beta-1,6-N-acetylglucosaminyltransferase 3 (440 aa).

The Cytoplasmic segment spans residues 1–12 (MKMTGWKKKLCR). The helical; Signal-anchor for type II membrane protein transmembrane segment at 13-30 (GHHLWALGCYSLLAVVAL) threads the bilayer. At 31-440 (RLSLRLKCDV…RHKAIYGTEL (410 aa)) the chain is on the lumenal side. 4 disulfides stabilise this stretch: Cys-73-Cys-230, Cys-164-Cys-384, Cys-185-Cys-212, and Cys-393-Cys-425. The N-linked (GlcNAc...) asparagine glycan is linked to Asn-108.

This sequence belongs to the glycosyltransferase 14 family. Post-translationally, N-glycosylated.

It localises to the golgi apparatus membrane. It catalyses the reaction a 3-O-[beta-D-galactosyl-(1-&gt;3)-N-acetyl-alpha-D-galactosaminyl]-L-seryl-[protein] + UDP-N-acetyl-alpha-D-glucosamine = 3-O-{beta-D-galactosyl-(1-&gt;3)-[N-acetyl-beta-D-glucosaminyl-(1-&gt;6)]-N-acetyl-alpha-D-galactosaminyl}-L-seryl-[protein] + UDP + H(+). It carries out the reaction a 3-O-[beta-D-galactosyl-(1-&gt;3)-N-acetyl-alpha-D-galactosaminyl]-L-threonyl-[protein] + UDP-N-acetyl-alpha-D-glucosamine = a 3-O-{beta-D-galactosyl-(1-&gt;3)-[N-acetyl-beta-D-glucosaminyl-(1-&gt;6)]-N-acetyl-alpha-D-galactosaminyl}-L-threonyl-[protein] + UDP + H(+). The catalysed reaction is a beta-D-Gal-(1-&gt;4)-beta-D-GlcNAc-(1-&gt;3)-beta-D-Gal-(1-&gt;4)-beta-D-GlcNAc derivative + UDP-N-acetyl-alpha-D-glucosamine = a beta-D-Gal-(1-&gt;4)-beta-D-GlcNAc-(1-&gt;3)-[beta-D-GlcNAc-(1-&gt;6)]-beta-D-Gal-(1-&gt;4)-N-acetyl-beta-D-glucosaminyl derivative + UDP + H(+). The enzyme catalyses 3-O-[N-acetyl-beta-D-glucosaminyl-(1-&gt;3)-N-acetyl-alpha-D-galactosaminyl]-L-seryl-[protein] + UDP-N-acetyl-alpha-D-glucosamine = 3-O-[N-acetyl-beta-D-glucosaminyl-(1-&gt;3)-[N-acetyl-beta-D-glucosaminyl-(1-&gt;6)]-N-acetyl-alpha-D-galactosaminyl]-L-seryl-[protein] + UDP + H(+). It catalyses the reaction a 3-O-[N-acetyl-beta-D-glucosaminyl-(1-&gt;3)-N-acetyl-alpha-D-galactosaminyl]-L-threonyl-[protein] + UDP-N-acetyl-alpha-D-glucosamine = 3-O-[N-acetyl-beta-D-glucosaminyl-(1-&gt;3)-[N-acetyl-beta-D-glucosaminyl-(1-&gt;6)]-N-acetyl-alpha-D-galactosaminyl]-L-threonyl-[protein] + UDP + H(+). It participates in protein modification; protein glycosylation. Its function is as follows. Glycosyltransferase that can synthesize all known mucin beta 6 N-acetylglucosaminides. Mediates core 2 and core 4 O-glycan branching, 2 important steps in mucin-type biosynthesis. Also has I-branching enzyme activity by converting linear into branched poly-N-acetyllactosaminoglycans, leading to introduce the blood group I antigen during embryonic development. The chain is Beta-1,3-galactosyl-O-glycosyl-glycoprotein beta-1,6-N-acetylglucosaminyltransferase 3 (GCNT3) from Bos mutus grunniens (Wild yak).